A 1081-amino-acid polypeptide reads, in one-letter code: Probable sucrose-phosphate synthase 2 (1081 aa).

Disordered regions lie at residues 116–152, 239–267, and 760–780; these read EQGR…PRGN, EPTE…EDLG, and IKRQ…GDVP. Over residues 256–267 the composition is skewed to acidic residues; sequence EPEEEEEEEDLG.

This sequence belongs to the glycosyltransferase 1 family. Homodimer or homotetramer.

It carries out the reaction beta-D-fructose 6-phosphate + UDP-alpha-D-glucose = sucrose 6(F)-phosphate + UDP + H(+). It functions in the pathway glycan biosynthesis; sucrose biosynthesis; sucrose from D-fructose 6-phosphate and UDP-alpha-D-glucose: step 1/2. Activity is regulated by phosphorylation and moderated by concentration of metabolites and light. Plays a role in photosynthetic sucrose synthesis by catalyzing the rate-limiting step of sucrose biosynthesis from UDP-glucose and fructose- 6-phosphate. Involved in the regulation of carbon partitioning in the leaves of plants. May regulate the synthesis of sucrose and therefore play a major role as a limiting factor in the export of photoassimilates out of the leaf. Plays a role for sucrose availability that is essential for plant growth and fiber elongation. The protein is Probable sucrose-phosphate synthase 2 (SPS2) of Craterostigma plantagineum (Blue gem).